The primary structure comprises 609 residues: Glutamine--fructose-6-phosphate aminotransferase [isomerizing] (609 aa).

Cys2 acts as the Nucleophile; for GATase activity in catalysis. The Glutamine amidotransferase type-2 domain occupies Cys2–Arg218. SIS domains are found at residues Ala286 to Val426 and Leu458 to Pro599. Lys604 serves as the catalytic For Fru-6P isomerization activity.

In terms of assembly, homodimer.

It is found in the cytoplasm. The catalysed reaction is D-fructose 6-phosphate + L-glutamine = D-glucosamine 6-phosphate + L-glutamate. Catalyzes the first step in hexosamine metabolism, converting fructose-6P into glucosamine-6P using glutamine as a nitrogen source. The chain is Glutamine--fructose-6-phosphate aminotransferase [isomerizing] from Photorhabdus laumondii subsp. laumondii (strain DSM 15139 / CIP 105565 / TT01) (Photorhabdus luminescens subsp. laumondii).